The primary structure comprises 692 residues: Elongation factor G (692 aa).

The tr-type G domain occupies 8 to 282 (ENTRNIGIMA…AVIDYLPSPL (275 aa)). GTP is bound by residues 17–24 (AHIDAGKT), 81–85 (DTPGH), and 135–138 (NKMD).

The protein belongs to the TRAFAC class translation factor GTPase superfamily. Classic translation factor GTPase family. EF-G/EF-2 subfamily.

It localises to the cytoplasm. Functionally, catalyzes the GTP-dependent ribosomal translocation step during translation elongation. During this step, the ribosome changes from the pre-translocational (PRE) to the post-translocational (POST) state as the newly formed A-site-bound peptidyl-tRNA and P-site-bound deacylated tRNA move to the P and E sites, respectively. Catalyzes the coordinated movement of the two tRNA molecules, the mRNA and conformational changes in the ribosome. In Bacillus cereus (strain G9842), this protein is Elongation factor G.